A 231-amino-acid polypeptide reads, in one-letter code: Putative cobalt transport protein CbiM 1 (231 aa).

The next 6 helical transmembrane spans lie at 6–26 (GFLP…FLIY), 41–61 (VLPL…VDIP), 79–99 (FFGP…QALL), 107–127 (TLGA…WLVF), 136–156 (VPLG…TYLI), and 172–192 (LTAF…ISII).

It belongs to the CbiM family. As to quaternary structure, forms an energy-coupling factor (ECF) transporter complex composed of an ATP-binding protein (A component, CbiO), a transmembrane protein (T component, CbiQ) and 2 possible substrate-capture proteins (S components, CbiM and CbiN) of unknown stoichimetry.

It is found in the cell membrane. It functions in the pathway cofactor biosynthesis; adenosylcobalamin biosynthesis. Functionally, part of the energy-coupling factor (ECF) transporter complex CbiMNOQ involved in cobalt import. The polypeptide is Putative cobalt transport protein CbiM 1 (Methanocorpusculum labreanum (strain ATCC 43576 / DSM 4855 / Z)).